The chain runs to 450 residues: Asparagine--tRNA ligase (450 aa).

It belongs to the class-II aminoacyl-tRNA synthetase family. As to quaternary structure, homodimer.

Its subcellular location is the cytoplasm. The enzyme catalyses tRNA(Asn) + L-asparagine + ATP = L-asparaginyl-tRNA(Asn) + AMP + diphosphate + H(+). The chain is Asparagine--tRNA ligase from Enterococcus faecalis (strain ATCC 700802 / V583).